The sequence spans 437 residues: Magnetosome protein MamN (437 aa).

11 consecutive transmembrane segments (helical) span residues 26–46, 53–73, 95–115, 136–156, 174–194, 226–246, 252–268, 281–301, 320–340, 358–378, and 416–436; these read LAVLAGAAALVVIGTISGSYT, SVYFETLALIFGMAAISALLA, WILVMMALVTYGISLASNSLV, VPVIIAEIIAANLGGASTMIG, FIAGMMPVCLILLAVMLVFFE, LLSYGLIIFGVTVAGLILAGP, GWIAFVAGVTALGLGRF, DILFYGGLFVMVGALTSVGIL, AILLMWMAAAVTIFVGGGTSA, AAWWALALGIMAGSVAALPGA, and WGMPLMGIFLVLGTVYIAVLV.

The protein belongs to the arsenite-antimonite (ArsB) efflux (TC 2.A.45) family.

The protein localises to the magnetosome membrane. In terms of biological role, plays a role in biomineralization; might regulate pH in the magnetosome. This chain is Magnetosome protein MamN (mamN), found in Paramagnetospirillum magneticum (strain ATCC 700264 / AMB-1) (Magnetospirillum magneticum).